Here is a 315-residue protein sequence, read N- to C-terminus: Glycine--tRNA ligase alpha subunit (315 aa).

The protein belongs to the class-II aminoacyl-tRNA synthetase family. As to quaternary structure, tetramer of two alpha and two beta subunits.

It is found in the cytoplasm. It catalyses the reaction tRNA(Gly) + glycine + ATP = glycyl-tRNA(Gly) + AMP + diphosphate. This is Glycine--tRNA ligase alpha subunit from Pseudomonas putida (strain ATCC 47054 / DSM 6125 / CFBP 8728 / NCIMB 11950 / KT2440).